The chain runs to 505 residues: Maturase K (505 aa).

The protein belongs to the intron maturase 2 family. MatK subfamily.

It localises to the plastid. The protein localises to the chloroplast. In terms of biological role, usually encoded in the trnK tRNA gene intron. Probably assists in splicing its own and other chloroplast group II introns. This Spinacia oleracea (Spinach) protein is Maturase K.